A 366-amino-acid chain; its full sequence is RNA 3'-terminal phosphate cyclase (366 aa).

Residues glutamine 104, proline 131, tyrosine 294, aspartate 297, glutamine 298, and histidine 320 each coordinate ATP. Histidine 320 serves as the catalytic Tele-AMP-histidine intermediate.

The protein belongs to the RNA 3'-terminal cyclase family. Type 1 subfamily.

It localises to the nucleus. Its subcellular location is the nucleoplasm. The catalysed reaction is a 3'-end 3'-phospho-ribonucleotide-RNA + ATP = a 3'-end 2',3'-cyclophospho-ribonucleotide-RNA + AMP + diphosphate. Catalyzes the conversion of 3'-phosphate to a 2',3'-cyclic phosphodiester at the end of RNA. The mechanism of action of the enzyme occurs in 3 steps: (A) adenylation of the enzyme by ATP; (B) transfer of adenylate to an RNA-N3'P to produce RNA-N3'PP5'A; (C) and attack of the adjacent 2'-hydroxyl on the 3'-phosphorus in the diester linkage to produce the cyclic end product. Likely functions in some aspects of cellular RNA processing. Function plays an important role in regulating axon regeneration by inhibiting central nervous system (CNS) axon regeneration following optic nerve injury. The chain is RNA 3'-terminal phosphate cyclase (RTCA) from Macaca fascicularis (Crab-eating macaque).